A 263-amino-acid polypeptide reads, in one-letter code: Probable ABC transporter permease protein ycf63 (263 aa).

6 consecutive transmembrane segments (helical) span residues 43 to 63, 82 to 102, 136 to 156, 159 to 179, 199 to 219, and 230 to 250; these read LVGPGSLNITLLTACFISMVF, AVIVIAFTRELSPVLTAVIIA, LVFPKVAACCIMLPILSTISL, SIAISIFVSFVMYGIPSSIFL, LCFGTIIAFISCQWGLTSSGG, and SVVTILLTIFITDFILSYFMF.

Belongs to the MlaE permease family.

It localises to the plastid. The protein resides in the chloroplast membrane. In terms of biological role, could be part of an ABC transporter complex. The protein is Probable ABC transporter permease protein ycf63 (ycf63) of Porphyra purpurea (Red seaweed).